The following is a 264-amino-acid chain: Thymidylate synthase (264 aa).

Arg21 contributes to the dUMP binding site. Residue His51 coordinates (6R)-5,10-methylene-5,6,7,8-tetrahydrofolate. 126–127 is a dUMP binding site; sequence RR. Cys146 functions as the Nucleophile in the catalytic mechanism. DUMP contacts are provided by residues 166 to 169, Asn177, and 207 to 209; these read RSAD and HLY. Residue Asp169 participates in (6R)-5,10-methylene-5,6,7,8-tetrahydrofolate binding. A (6R)-5,10-methylene-5,6,7,8-tetrahydrofolate-binding site is contributed by Ser263.

Belongs to the thymidylate synthase family. Bacterial-type ThyA subfamily. As to quaternary structure, homodimer.

Its subcellular location is the cytoplasm. The enzyme catalyses dUMP + (6R)-5,10-methylene-5,6,7,8-tetrahydrofolate = 7,8-dihydrofolate + dTMP. It functions in the pathway pyrimidine metabolism; dTTP biosynthesis. Catalyzes the reductive methylation of 2'-deoxyuridine-5'-monophosphate (dUMP) to 2'-deoxythymidine-5'-monophosphate (dTMP) while utilizing 5,10-methylenetetrahydrofolate (mTHF) as the methyl donor and reductant in the reaction, yielding dihydrofolate (DHF) as a by-product. This enzymatic reaction provides an intracellular de novo source of dTMP, an essential precursor for DNA biosynthesis. This is Thymidylate synthase from Shouchella clausii (strain KSM-K16) (Alkalihalobacillus clausii).